The primary structure comprises 166 residues: uncharacterized protein (166 aa).

Residues F34–M54 form a helical membrane-spanning segment. Disordered stretches follow at residues Q73–F93 and T123–V166.

It localises to the vacuole membrane. This is an uncharacterized protein from Schizosaccharomyces pombe (strain 972 / ATCC 24843) (Fission yeast).